Reading from the N-terminus, the 591-residue chain is V-type ATP synthase alpha chain (591 aa).

233-240 serves as a coordination point for ATP; the sequence is GPFGAGKT.

Belongs to the ATPase alpha/beta chains family.

The catalysed reaction is ATP + H2O + 4 H(+)(in) = ADP + phosphate + 5 H(+)(out). Its function is as follows. Produces ATP from ADP in the presence of a proton gradient across the membrane. The V-type alpha chain is a catalytic subunit. The polypeptide is V-type ATP synthase alpha chain (Streptococcus pyogenes serotype M12 (strain MGAS2096)).